The primary structure comprises 360 residues: Phenylalanine--tRNA ligase alpha subunit (360 aa).

Residue E260 coordinates Mg(2+).

This sequence belongs to the class-II aminoacyl-tRNA synthetase family. Phe-tRNA synthetase alpha subunit type 1 subfamily. As to quaternary structure, tetramer of two alpha and two beta subunits. The cofactor is Mg(2+).

Its subcellular location is the cytoplasm. It catalyses the reaction tRNA(Phe) + L-phenylalanine + ATP = L-phenylalanyl-tRNA(Phe) + AMP + diphosphate + H(+). The polypeptide is Phenylalanine--tRNA ligase alpha subunit (Sinorhizobium fredii (strain NBRC 101917 / NGR234)).